Here is a 218-residue protein sequence, read N- to C-terminus: Cytochrome b6 (218 aa).

The helical transmembrane segment at 35-55 (IFYCLGGITLVCFLIQFATGF) threads the bilayer. Position 38 (Cys38) interacts with heme c. Heme b contacts are provided by His89 and His103. Transmembrane regions (helical) follow at residues 93-113 (ASMM…TGGF), 119-139 (LTWV…VTGY), and 189-209 (LHTF…FLMI). Heme b-binding residues include His190 and His205.

The protein belongs to the cytochrome b family. PetB subfamily. In terms of assembly, the 4 large subunits of the cytochrome b6-f complex are cytochrome b6, subunit IV (17 kDa polypeptide, PetD), cytochrome f and the Rieske protein, while the 4 small subunits are PetG, PetL, PetM and PetN. The complex functions as a dimer. The cofactor is heme b. Heme c serves as cofactor.

The protein resides in the cellular thylakoid membrane. In terms of biological role, component of the cytochrome b6-f complex, which mediates electron transfer between photosystem II (PSII) and photosystem I (PSI), cyclic electron flow around PSI, and state transitions. The sequence is that of Cytochrome b6 from Prochlorococcus marinus subsp. pastoris (strain CCMP1986 / NIES-2087 / MED4).